The following is a 607-amino-acid chain: Chaperone protein DnaK (607 aa).

Position 174 is a phosphothreonine; by autocatalysis (Thr-174). Polar residues predominate over residues Gln-577–Asn-594. The segment at Gln-577–Asn-607 is disordered.

It belongs to the heat shock protein 70 family.

Acts as a chaperone. In Dictyoglomus turgidum (strain DSM 6724 / Z-1310), this protein is Chaperone protein DnaK.